We begin with the raw amino-acid sequence, 271 residues long: Probable ribosomal RNA small subunit methyltransferase A (271 aa).

Residues leucine 12, glycine 37, glutamate 58, aspartate 83, and asparagine 100 each coordinate S-adenosyl-L-methionine.

This sequence belongs to the class I-like SAM-binding methyltransferase superfamily. rRNA adenine N(6)-methyltransferase family. RsmA subfamily.

Its subcellular location is the cytoplasm. Its function is as follows. Specifically dimethylates two adjacent adenosines in the loop of a conserved hairpin near the 3'-end of 16S rRNA in the 30S particle. May play a critical role in biogenesis of 30S subunits. The chain is Probable ribosomal RNA small subunit methyltransferase A from Methanococcus aeolicus (strain ATCC BAA-1280 / DSM 17508 / OCM 812 / Nankai-3).